The sequence spans 188 residues: Peptide deformylase (188 aa).

2 residues coordinate Fe cation: C107 and H149. Residue E150 is part of the active site. H153 contributes to the Fe cation binding site.

It belongs to the polypeptide deformylase family. Requires Fe(2+) as cofactor.

The enzyme catalyses N-terminal N-formyl-L-methionyl-[peptide] + H2O = N-terminal L-methionyl-[peptide] + formate. Removes the formyl group from the N-terminal Met of newly synthesized proteins. Requires at least a dipeptide for an efficient rate of reaction. N-terminal L-methionine is a prerequisite for activity but the enzyme has broad specificity at other positions. In Thermosynechococcus vestitus (strain NIES-2133 / IAM M-273 / BP-1), this protein is Peptide deformylase.